We begin with the raw amino-acid sequence, 662 residues long: Mitochondrial Rho GTPase 1 (662 aa).

The Cytoplasmic portion of the chain corresponds to 1-634 (MTKETIRVVI…AKDVDYRQTA (634 aa)). Residues 3–185 (KETIRVVICG…FYLCQRAITH (183 aa)) enclose the Miro 1 domain. Residues 12–19 (GDEGVGKS), 62–64 (DTS), and 116–119 (NKCD) each bind GTP. EF-hand domains lie at 201–236 (LAVMALKRIFLLSDLNQDSYLDDNEILGLQKKCFNK) and 330–365 (KGYRFLVDIFLKFDIDNDGGLNNQELHRLFKCTPGL). Aspartate 214, asparagine 216, aspartate 218, tyrosine 220, glutamate 225, aspartate 343, aspartate 345, aspartate 347, and glutamate 354 together coordinate Ca(2+). The Miro 2 domain maps to 446–611 (RKVFNCFVIG…FIKITEAALD (166 aa)). GTP-binding positions include 455–462 (GKPCCGKS), 491–495 (ELKGG), and 560–563 (SKAD). A helical; Anchor for type IV membrane protein transmembrane segment spans residues 635 to 655 (LIFGSTVGFVALCSFTLMKLF). The Mitochondrial intermembrane segment spans residues 656–662 (KSSKFSK).

This sequence belongs to the mitochondrial Rho GTPase family.

The protein resides in the mitochondrion outer membrane. In terms of biological role, mitochondrial GTPase involved in mitochondrial trafficking. Probably involved in control of anterograde transport of mitochondria and their subcellular distribution. The polypeptide is Mitochondrial Rho GTPase 1 (GEM1) (Saccharomyces cerevisiae (strain ATCC 204508 / S288c) (Baker's yeast)).